Here is a 380-residue protein sequence, read N- to C-terminus: Ceramide synthase 2 (380 aa).

Topologically, residues 1–40 are lumenal; the sequence is MLQTLYDYFWWERLWLPVNLTWADLEDKDGRVYAKASDLY. Residue asparagine 19 is glycosylated (N-linked (GlcNAc...) asparagine). A helical transmembrane segment spans residues 41–61; that stretch reads ITLPLALLFLVIRYFFELYVA. The homeobox-like stretch occupies residues 67 to 128; that stretch reads LLNVKEKTRL…RRRRNQDRPS (62 aa). The region spanning 131 to 332 is the TLC domain; it reads KKFREASWRF…ILRMAHKFIT (202 aa). A run of 4 helical transmembrane segments spans residues 140 to 160, 175 to 195, 209 to 229, and 264 to 284; these read FTYY…KPWF, IIPS…SLLF, QIIH…ANYV, and LFIV…PFWI. The Last loop motif motif lies at 291–300; it reads YPLELYPAFF. A helical membrane pass occupies residues 304-324; that stretch reads FFNFMMAVLQMLHIFWAYFIL. Residues 325–380 lie on the Cytoplasmic side of the membrane; that stretch reads RMAHKFITGKLIEDERSDREETESSEGEETAAGAGAKSRLLANGHPILNNNHPKND. The tract at residues 340–380 is disordered; sequence RSDREETESSEGEETAAGAGAKSRLLANGHPILNNNHPKND. A Phosphoserine modification is found at serine 341. The segment covering 344–353 has biased composition (acidic residues); the sequence is EETESSEGEE. At threonine 346 the chain carries Phosphothreonine. A phosphoserine mark is found at serine 348 and serine 349.

In terms of assembly, interacts with ATP6V0C, ASGR1, ASGR2 and SLC22A1/OCT1. Interacts with ELOV1, HSD17B12 and TECR. Interacts with NDUFS2. Interacts with PAQR4; the interaction regulates the stability and activity of CERS2 and is inhibited in presence of ceramides. Acetylated. Deacetylation by SIRT3 increases enzyme activity and promotes mitochondrial ceramide accumulation. Post-translationally, phosphorylated at the C-terminus by CK2, leading to increase the ceramide synthase activity. In terms of tissue distribution, broadly expressed, with highest levels in liver and kidney. In brain is detected in neurons, oligodentrocytes, ependymal cells and epithelial cells of the choroid plexus. In kidney is detected in collecting ducts and to a lesser degree in proximal tubules.

It is found in the endoplasmic reticulum membrane. It carries out the reaction a very long-chain fatty acyl-CoA + a sphingoid base = an N-(very-long-chain fatty acyl)-sphingoid base + CoA + H(+). The enzyme catalyses docosanoyl-CoA + sphinganine = N-docosanoylsphinganine + CoA + H(+). It catalyses the reaction tetracosanoyl-CoA + sphinganine = N-tetracosanoylsphinganine + CoA + H(+). The catalysed reaction is hexacosanoyl-CoA + sphinganine = N-hexacosanoylsphinganine + CoA + H(+). It carries out the reaction (15Z)-tetracosenoyl-CoA + sphinganine = N-(15Z-tetracosenoyl)-sphinganine + CoA + H(+). The enzyme catalyses 2-hydroxytetracosanoyl-CoA + sphinganine = N-(2-hydroxytetracosanoyl)-sphinganine + CoA + H(+). It catalyses the reaction 2-hydroxydocosanoyl-CoA + sphinganine = N-(2-hydroxydocosanoyl)-sphinganine + CoA + H(+). The catalysed reaction is 2-hydroxytetracosenoyl-CoA + sphinganine = N-(2-hydroxytetracosenoyl)-sphinganine + CoA + H(+). It carries out the reaction tetracosenoyl-CoA + sphinganine = an N-tetracosenoylsphinganine + CoA + H(+). The enzyme catalyses hexacosenoyl-CoA + sphinganine = N-hexacosenoylsphinganine + CoA + H(+). It catalyses the reaction tetracosanoyl-CoA + sphing-4-enine = N-tetracosanoyl-sphing-4-enine + CoA + H(+). The catalysed reaction is tetracosenoyl-CoA + sphing-4-enine = N-(tetracosenoyl)-sphing-4-enine + CoA + H(+). It carries out the reaction heptadecasphing-4-enine + tetracosanoyl-CoA = N-tetracosanoyl-heptadecasphing-4-enine + CoA + H(+). The enzyme catalyses a fatty acyl-CoA + sphing-4-enine = an N-acylsphing-4-enine + CoA + H(+). It catalyses the reaction sphing-4-enine + hexadecanoyl-CoA = N-hexadecanoylsphing-4-enine + CoA + H(+). The catalysed reaction is sphing-4-enine + octadecanoyl-CoA = N-octadecanoylsphing-4-enine + CoA + H(+). It carries out the reaction eicosanoyl-CoA + sphing-4-enine = N-eicosanoyl-sphing-4-enine + CoA + H(+). The enzyme catalyses sphinganine + hexadecanoyl-CoA = N-hexadecanoylsphinganine + CoA + H(+). It catalyses the reaction sphinganine + octadecanoyl-CoA = N-(octadecanoyl)-sphinganine + CoA + H(+). The catalysed reaction is sphinganine + (9Z)-octadecenoyl-CoA = N-(9Z-octadecenoyl)-sphinganine + CoA + H(+). It carries out the reaction eicosanoyl-CoA + sphinganine = N-eicosanoylsphinganine + CoA + H(+). It functions in the pathway lipid metabolism; sphingolipid metabolism. Ceramide synthase activity is inhibited by sphingosine-1-phosphate. Its function is as follows. Ceramide synthase that catalyzes the transfer of the acyl chain from acyl-CoA to a sphingoid base, with high selectivity toward very-long-chain fatty acyl-CoA (chain length C22-C27). N-acylates sphinganine and sphingosine bases to form dihydroceramides and ceramides in de novo synthesis and salvage pathways, respectively. Plays a non-redundant role in the synthesis of ceramides with very-long-chain fatty acids in kidney, liver and brain. Regulates the abundance of myelin-specific sphingolipids galactosylceramide and sulfatide that affects myelin sheath architecture and motor neuron functions. This chain is Ceramide synthase 2, found in Mus musculus (Mouse).